The primary structure comprises 313 residues: Sideroflexin-4 (313 aa).

5 consecutive transmembrane segments (helical) span residues 87-107 (AALLPFTAPTLFLSMLPVKSL), 141-161 (LLLGAGVIVSSTFLGLFPRLL), 175-191 (FIPVIILAQLSGMNVIA), 230-247 (VVLFGTSAFIPEVFAYFF), and 269-289 (VLVMGLMVPVSFSVFPQIGRI).

This sequence belongs to the sideroflexin family.

The protein resides in the mitochondrion inner membrane. Functionally, mitochondrial amino-acid transporter. Does not act as a serine transporter: not able to mediate transport of serine into mitochondria. This chain is Sideroflexin-4, found in Bos taurus (Bovine).